The sequence spans 383 residues: Glutamyl-tRNA reductase (383 aa).

Substrate-binding positions include 38 to 41, Ser82, 87 to 89, and Gln93; these read TCNR and EDQ. Residue Cys39 is the Nucleophile of the active site. NADP(+) is bound at residue 161 to 166; it reads GAGEIA.

Belongs to the glutamyl-tRNA reductase family. As to quaternary structure, homodimer.

It carries out the reaction (S)-4-amino-5-oxopentanoate + tRNA(Glu) + NADP(+) = L-glutamyl-tRNA(Glu) + NADPH + H(+). It participates in porphyrin-containing compound metabolism; protoporphyrin-IX biosynthesis; 5-aminolevulinate from L-glutamyl-tRNA(Glu): step 1/2. Its function is as follows. Catalyzes the NADPH-dependent reduction of glutamyl-tRNA(Glu) to glutamate 1-semialdehyde (GSA). The chain is Glutamyl-tRNA reductase from Methanococcus aeolicus (strain ATCC BAA-1280 / DSM 17508 / OCM 812 / Nankai-3).